A 461-amino-acid chain; its full sequence is Argininosuccinate lyase (461 aa).

It belongs to the lyase 1 family. Argininosuccinate lyase subfamily. In terms of assembly, homotetramer.

It localises to the cytoplasm. It catalyses the reaction 2-(N(omega)-L-arginino)succinate = fumarate + L-arginine. It participates in amino-acid biosynthesis; L-arginine biosynthesis; L-arginine from L-ornithine and carbamoyl phosphate: step 3/3. The chain is Argininosuccinate lyase from Nostoc punctiforme (strain ATCC 29133 / PCC 73102).